A 487-amino-acid chain; its full sequence is MKYKSIMLLGTASSVGKSTVAAAFCRYFKKKGYRVAPYKALNISLNSFVTKDGDEIGRAQVVQAEACEIDPKEYMNPILMKPSAGFKTQVIVRGKVHCTMDAYKYKELNKYLKEKAKEAYDDISNDYDLIVLEGSGSCAEINLRETDIANMHTAKMADADVILVSDINRGGVFASIVGTIMLLTEEERKRVKGVIINKFRGKREFFEPAMRQIEEIIKIPVLGVMPYFDLDIEEEDSASIKLRKGNGKGIDIAIVRLPHMSNFTDFNSLGRIKDVCIRYAENPKDLENANMIIIPGSKNTIDDLIYLKESGFKEALINESSKGKLIFGICGGYQILGEKIIDSLGVEGDIREEEGLGLLNIVTSFNKEKTTKQVVAFDLEGNEVSGYEIHNGESVPTAKENIWIKEQNGNVLGMKNKEQNVFGTYIHGIFDEGDFGEKLINKLKKELNIEESNDVNYKDYKMSQYDKLCELLEENIDMAYVENLIRY.

Residues 249–435 form the GATase cobBQ-type domain; it reads GIDIAIVRLP…IHGIFDEGDF (187 aa). Cysteine 330 acts as the Nucleophile in catalysis. The active site involves histidine 427.

This sequence belongs to the CobB/CobQ family. CobQ subfamily.

It participates in cofactor biosynthesis; adenosylcobalamin biosynthesis. Functionally, catalyzes amidations at positions B, D, E, and G on adenosylcobyrinic A,C-diamide. NH(2) groups are provided by glutamine, and one molecule of ATP is hydrogenolyzed for each amidation. This is Cobyric acid synthase from Clostridium perfringens (strain SM101 / Type A).